The following is a 205-amino-acid chain: Thymidine kinase (205 aa).

ATP-binding positions include 9-16 and 87-90; these read SAMNAGKS and DECQ. Catalysis depends on glutamate 88, which acts as the Proton acceptor. Zn(2+) contacts are provided by cysteine 145, cysteine 147, cysteine 182, and histidine 185.

Belongs to the thymidine kinase family. Homotetramer.

Its subcellular location is the cytoplasm. The catalysed reaction is thymidine + ATP = dTMP + ADP + H(+). With respect to regulation, allosteric enzyme which is feedback inhibited by dTTP and activated by a number of dNDP and dNTP. In terms of biological role, phosphorylates both thymidine and deoxyuridine. The protein is Thymidine kinase of Escherichia coli O157:H7.